The chain runs to 153 residues: Carbohydrate-binding protein AWN (153 aa).

Positions 1 to 20 are cleaved as a signal peptide; it reads MKLAAPSLALLLSTATLVSG. N-acetylalanine is present on Ala-21. 2 disulfides stabilise this stretch: Cys-29-Cys-50 and Cys-73-Cys-94. A CUB domain is found at 29–130; sequence CGGVLRDPPG…SPFHIYYYAD (102 aa). The heparin-binding stretch occupies residues 93-130; the sequence is ICGGISLVFRSSSNIATIKYLRTSGQRASPFHIYYYAD.

It belongs to the spermadhesin family. Post-translationally, partial N-acetylation differentiates isoforms AWN-1 (not acetylated) and AWN-2 (acetylated).

Its subcellular location is the secreted. In terms of biological role, AWN proteins mediate the binding of boar spermatozoa to component(s) of the egg's zona pellucida by a carbohydrate-binding mechanism. Awn proteins are secretory components of the male accessory glands being coated to the sperm surface at the time of ejaculation. They possess as well heparin-, serine-protease-inhibitor-binding capability. In Sus scrofa (Pig), this protein is Carbohydrate-binding protein AWN.